A 483-amino-acid chain; its full sequence is Glutamyl-tRNA(Gln) amidotransferase subunit A (483 aa).

Catalysis depends on charge relay system residues K75 and S150. S174 serves as the catalytic Acyl-ester intermediate.

Belongs to the amidase family. GatA subfamily. In terms of assembly, heterotrimer of A, B and C subunits.

It catalyses the reaction L-glutamyl-tRNA(Gln) + L-glutamine + ATP + H2O = L-glutaminyl-tRNA(Gln) + L-glutamate + ADP + phosphate + H(+). Functionally, allows the formation of correctly charged Gln-tRNA(Gln) through the transamidation of misacylated Glu-tRNA(Gln) in organisms which lack glutaminyl-tRNA synthetase. The reaction takes place in the presence of glutamine and ATP through an activated gamma-phospho-Glu-tRNA(Gln). The sequence is that of Glutamyl-tRNA(Gln) amidotransferase subunit A from Legionella pneumophila (strain Corby).